We begin with the raw amino-acid sequence, 115 residues long: NADH-ubiquinone oxidoreductase chain 3 (115 aa).

The next 3 membrane-spanning stretches (helical) occupy residues 3 to 23 (LALA…ITFW), 55 to 75 (FFLV…LLPL), and 86 to 106 (LTIA…AYEW).

The protein belongs to the complex I subunit 3 family. In terms of assembly, core subunit of respiratory chain NADH dehydrogenase (Complex I) which is composed of 45 different subunits. Interacts with TMEM186. Interacts with TMEM242.

Its subcellular location is the mitochondrion inner membrane. It carries out the reaction a ubiquinone + NADH + 5 H(+)(in) = a ubiquinol + NAD(+) + 4 H(+)(out). Functionally, core subunit of the mitochondrial membrane respiratory chain NADH dehydrogenase (Complex I) which catalyzes electron transfer from NADH through the respiratory chain, using ubiquinone as an electron acceptor. Essential for the catalytic activity of complex I. This is NADH-ubiquinone oxidoreductase chain 3 from Hylobates lar (Lar gibbon).